A 177-amino-acid polypeptide reads, in one-letter code: RNA pyrophosphohydrolase (177 aa).

In terms of domain architecture, Nudix hydrolase spans 6-149; the sequence is GYRPNVGIVI…KRDVYRRVMK (144 aa). The Nudix box motif lies at 38–59; that stretch reads GGINAGETAEQAMYRELFEEVG.

It belongs to the Nudix hydrolase family. RppH subfamily. The cofactor is a divalent metal cation.

In terms of biological role, accelerates the degradation of transcripts by removing pyrophosphate from the 5'-end of triphosphorylated RNA, leading to a more labile monophosphorylated state that can stimulate subsequent ribonuclease cleavage. This Edwardsiella ictaluri (strain 93-146) protein is RNA pyrophosphohydrolase.